Consider the following 55-residue polypeptide: Glycine-rich antimicrobial peptide Pg-AMP (55 aa).

The segment covering 18–39 has biased composition (gly residues); the sequence is GYGGYGGGRYGGGYGSGRGQPV. The segment at 18 to 55 is disordered; the sequence is GYGGYGGGRYGGGYGSGRGQPVGQGVERSHDDNRNQPR. Basic and acidic residues predominate over residues 44 to 55; it reads ERSHDDNRNQPR.

In terms of assembly, monomer and homodimer. Might act by homodimer formation.

Functionally, has antibacterial activity against the Gram-negative bacteria Klebsiella sp., Proteus sp., E.coli ATCC 8739 (MIC=72 ug/ml) and K.pneumoniae (MIC=32 ug/ml). Has no activity against the Gram-negative bacterium S.typhimurium or the Gram-positive bacterium S.aureus. Does not have antifungal activity against the human and plant pathogenic fungi F.oxysporum, A.fumigatus and R.solani. This Psidium guajava (Guava) protein is Glycine-rich antimicrobial peptide Pg-AMP.